The following is a 418-amino-acid chain: Equilibrative nucleotide transporter 6 (418 aa).

The next 11 helical transmembrane spans lie at 19 to 39 (AMIV…SMLT), 56 to 76 (VLTL…AYHE), 86 to 106 (LIGY…DLAT), 112 to 132 (FGPY…DATV), 142 to 162 (LMCP…GALT), 186 to 206 (MFLA…AYVL), 264 to 284 (HAVN…GFLY), 291 to 311 (GLGA…DLVG), 326 to 346 (KLIT…YFTA), 353 to 373 (WMIM…VCIM), and 392 to 412 (LVIF…LWLI).

The protein belongs to the SLC29A/ENT transporter (TC 2.A.57) family. Expressed in leaves and siliques.

It is found in the cell membrane. Nucleoside transporter that can mediate uptake of adenosine, uridine, guanosine or cytidine when expressed in a heterologous system (yeast). This Arabidopsis thaliana (Mouse-ear cress) protein is Equilibrative nucleotide transporter 6 (ENT6).